A 193-amino-acid polypeptide reads, in one-letter code: MITSLTGTILQRRPPWLWLDVQGVGYELEMPLSGFYQMPAEGAALTVHTHLTIREDAHLLYGFMTVAERDMFRLLIRVNGIGGKVALACLSGLPAERLSQAVAEGNTAQLTAIPGIGPKTAERLVVELRDKMGGIAPGPMGRGGAGDPRQEAIAALLTLGYKPAQASQAIAGLADGLGLEDLIRQSLQNLSRH.

Positions 1-64 are domain I; sequence MITSLTGTIL…EDAHLLYGFM (64 aa). Residues 65–139 are domain II; the sequence is TVAERDMFRL…DKMGGIAPGP (75 aa). A flexible linker region spans residues 139–143; it reads PMGRG. The tract at residues 144-193 is domain III; sequence GAGDPRQEAIAALLTLGYKPAQASQAIAGLADGLGLEDLIRQSLQNLSRH.

It belongs to the RuvA family. As to quaternary structure, homotetramer. Forms an RuvA(8)-RuvB(12)-Holliday junction (HJ) complex. HJ DNA is sandwiched between 2 RuvA tetramers; dsDNA enters through RuvA and exits via RuvB. An RuvB hexamer assembles on each DNA strand where it exits the tetramer. Each RuvB hexamer is contacted by two RuvA subunits (via domain III) on 2 adjacent RuvB subunits; this complex drives branch migration. In the full resolvosome a probable DNA-RuvA(4)-RuvB(12)-RuvC(2) complex forms which resolves the HJ.

It is found in the cytoplasm. The RuvA-RuvB-RuvC complex processes Holliday junction (HJ) DNA during genetic recombination and DNA repair, while the RuvA-RuvB complex plays an important role in the rescue of blocked DNA replication forks via replication fork reversal (RFR). RuvA specifically binds to HJ cruciform DNA, conferring on it an open structure. The RuvB hexamer acts as an ATP-dependent pump, pulling dsDNA into and through the RuvAB complex. HJ branch migration allows RuvC to scan DNA until it finds its consensus sequence, where it cleaves and resolves the cruciform DNA. The sequence is that of Holliday junction branch migration complex subunit RuvA from Acidithiobacillus ferrooxidans (strain ATCC 53993 / BNL-5-31) (Leptospirillum ferrooxidans (ATCC 53993)).